Reading from the N-terminus, the 581-residue chain is Protein ORF B (581 aa).

The sequence is that of Protein ORF B from Elephas maximus (Indian elephant).